Here is an 866-residue protein sequence, read N- to C-terminus: Dimethylglycine dehydrogenase, mitochondrial (866 aa).

A mitochondrion-targeting transit peptide spans 1-50 (MLRPGAQLLRGLLLRSCPLQGSPGRPRSVCGREGEEKPPLSAETQWKDRA). The disordered stretch occupies residues 20 to 42 (QGSPGRPRSVCGREGEEKPPLSA). Residues 59–60 (CV), 80–81 (EK), and 87–95 (GSTWHAAGL) contribute to the FAD site. At His91 the chain carries Tele-8alpha-FAD histidine. Residue Lys114 is modified to N6-acetyllysine. An N6-acetyllysine; alternate modification is found at Lys148. Lys148 bears the N6-succinyllysine; alternate mark. Lys168 carries the post-translational modification N6-acetyllysine. Residue Val219 participates in FAD binding. Position 223 is an N6-acetyllysine (Lys223). An FAD-binding site is contributed by Trp251. Lys317 and Lys319 each carry N6-succinyllysine. N6-acetyllysine occurs at positions 335 and 360. 397 to 402 (FGYGII) lines the FAD pocket. Lys434 and Lys523 each carry N6-acetyllysine; alternate. Residues Lys434 and Lys523 each carry the N6-succinyllysine; alternate modification. Residue 580-582 (ELT) participates in (6S)-5,6,7,8-tetrahydrofolate binding. N6-acetyllysine; alternate is present on Lys655. At Lys655 the chain carries N6-succinyllysine; alternate. (6S)-5,6,7,8-tetrahydrofolate-binding positions include Tyr676, 683-685 (ELY), and Tyr744. Position 764 is an N6-acetyllysine (Lys764). An N6-succinyllysine modification is found at Lys795.

It belongs to the GcvT family. Monomer. FAD is required as a cofactor.

The protein resides in the mitochondrion. It catalyses the reaction (6S)-5,6,7,8-tetrahydrofolyl-(gamma-L-Glu)(n) + N,N-dimethylglycine + oxidized [electron-transfer flavoprotein] + H(+) = (6R)-5,10-methylenetetrahydrofolyl-(gamma-L-Glu)(n) + sarcosine + reduced [electron-transfer flavoprotein]. The protein operates within amine and polyamine degradation; betaine degradation; sarcosine from betaine: step 2/2. Catalyzes the demethylation of N,N-dimethylglycine to sarcosine. Also has activity with sarcosine in vitro. The chain is Dimethylglycine dehydrogenase, mitochondrial (DMGDH) from Homo sapiens (Human).